A 130-amino-acid polypeptide reads, in one-letter code: Small ribosomal subunit protein uS9 (130 aa).

Belongs to the universal ribosomal protein uS9 family.

The sequence is that of Small ribosomal subunit protein uS9 from Burkholderia multivorans (strain ATCC 17616 / 249).